Consider the following 200-residue polypeptide: Probable GTP-binding protein EngB (200 aa).

Positions S26–K200 constitute an EngB-type G domain. GTP contacts are provided by residues G34–S41, G61–Q65, D80–G83, T147–D150, and V179–S181. S41 and T63 together coordinate Mg(2+).

Belongs to the TRAFAC class TrmE-Era-EngA-EngB-Septin-like GTPase superfamily. EngB GTPase family. Mg(2+) is required as a cofactor.

Its function is as follows. Necessary for normal cell division and for the maintenance of normal septation. This chain is Probable GTP-binding protein EngB, found in Ehrlichia ruminantium (strain Welgevonden).